The following is a 160-amino-acid chain: MTDQQAEARSYLSEEMIAEFKAAFDMFDADGGGDISVKELGTVMRMLGQTPTKEELDAIIEEVDEDGSGTIDFEEFLVMMVRQMKEDAKGKSEEELAECFRIFDRNADGYIDAEELAEIFRASGEHVTEEEIESLMKDGDKNNDGRIDFDEFLKMMEGVQ.

An N-acetylthreonine modification is found at Thr-2. 4 EF-hand domains span residues 15 to 50, 51 to 86, 91 to 126, and 127 to 160; these read EMIAEFKAAFDMFDADGGGDISVKELGTVMRMLGQT, PTKEELDAIIEEVDEDGSGTIDFEEFLVMMVRQMKE, KSEEELAECFRIFDRNADGYIDAEELAEIFRASGEH, and VTEEEIESLMKDGDKNNDGRIDFDEFLKMMEGVQ. 19 residues coordinate Ca(2+): Asp-28, Asp-30, Asp-34, Glu-39, Asp-64, Asp-66, Ser-68, Thr-70, Glu-75, Asp-104, Asn-106, Asp-108, Tyr-110, Glu-115, Asp-140, Asn-142, Asp-144, Arg-146, and Glu-151.

The protein belongs to the troponin C family. Fast skeletal muscle.

In terms of biological role, troponin is the central regulatory protein of striated muscle contraction. Tn consists of three components: Tn-I which is the inhibitor of actomyosin ATPase, Tn-T which contains the binding site for tropomyosin and Tn-C. The binding of calcium to Tn-C abolishes the inhibitory action of Tn on actin filaments. The chain is Troponin C, skeletal muscle (Tnnc2) from Mus musculus (Mouse).